Consider the following 665-residue polypeptide: DNA mismatch repair protein MutL (665 aa).

Composition is skewed to polar residues over residues 348-361 and 407-421; these read LEAT…NGLS and PSSQ…NSRY. Disordered stretches follow at residues 348 to 370 and 385 to 445; these read LEAT…AEEG and VHRG…STSA. Positions 426–445 are enriched in low complexity; the sequence is YSTNAASTNTASNYSHSTSA.

The protein belongs to the DNA mismatch repair MutL/HexB family.

Its function is as follows. This protein is involved in the repair of mismatches in DNA. It is required for dam-dependent methyl-directed DNA mismatch repair. May act as a 'molecular matchmaker', a protein that promotes the formation of a stable complex between two or more DNA-binding proteins in an ATP-dependent manner without itself being part of a final effector complex. This is DNA mismatch repair protein MutL from Shewanella denitrificans (strain OS217 / ATCC BAA-1090 / DSM 15013).